We begin with the raw amino-acid sequence, 192 residues long: dTTP/UTP pyrophosphatase (192 aa).

The active-site Proton acceptor is Asp-75.

The protein belongs to the Maf family. YhdE subfamily. It depends on a divalent metal cation as a cofactor.

The protein resides in the cytoplasm. It catalyses the reaction dTTP + H2O = dTMP + diphosphate + H(+). The catalysed reaction is UTP + H2O = UMP + diphosphate + H(+). Its function is as follows. Nucleoside triphosphate pyrophosphatase that hydrolyzes dTTP and UTP. May have a dual role in cell division arrest and in preventing the incorporation of modified nucleotides into cellular nucleic acids. The protein is dTTP/UTP pyrophosphatase of Bdellovibrio bacteriovorus (strain ATCC 15356 / DSM 50701 / NCIMB 9529 / HD100).